A 661-amino-acid polypeptide reads, in one-letter code: Ubiquitin-associated and SH3 domain-containing protein A (661 aa).

The UBA domain maps to 15–60 (KLKSRSSPSLLEPLLAMGFPVHTALKALAATGRKTAEEALAWLHDH). The SH3 domain occupies 276–341 (VHYQTLRALF…PENYTDRASE (66 aa)). Residues 395-661 (RKSVLVVRHG…FNWRNWISGN (267 aa)) are phosphatase-like.

Homodimer or homooligomer. Interacts with CBL. Part of a complex containing CBL and activated EGFR. Interacts with ubiquitin and with mono-ubiquitinated proteins. Interacts with dynamin. In terms of tissue distribution, highest expression of UBASH3A in tissues belonging to the immune system, including spleen, peripheral blood leukocytes, thymus and bone marrow.

It is found in the cytoplasm. The protein localises to the nucleus. Functionally, interferes with CBL-mediated down-regulation and degradation of receptor-type tyrosine kinases. Promotes accumulation of activated target receptors, such as T-cell receptors, EGFR and PDGFRB, on the cell surface. Exhibits negligible protein tyrosine phosphatase activity at neutral pH. May act as a dominant-negative regulator of UBASH3B-dependent dephosphorylation. May inhibit dynamin-dependent endocytic pathways by functionally sequestering dynamin via its SH3 domain. This chain is Ubiquitin-associated and SH3 domain-containing protein A (UBASH3A), found in Homo sapiens (Human).